A 552-amino-acid chain; its full sequence is Glutamine--tRNA ligase (552 aa).

The short motif at 34–44 is the 'HIGH' region element; sequence PEPNGYLHIGH. Residues 35 to 37 and 41 to 47 each bind ATP; these read EPN and HIGHAKS. Positions 67 and 212 each coordinate L-glutamine. ATP-binding positions include Thr-231, 261-262, and 269-271; these read RL and MSK. A 'KMSKS' region motif is present at residues 268 to 272; that stretch reads IMSKR.

It belongs to the class-I aminoacyl-tRNA synthetase family. Monomer.

Its subcellular location is the cytoplasm. It carries out the reaction tRNA(Gln) + L-glutamine + ATP = L-glutaminyl-tRNA(Gln) + AMP + diphosphate. This chain is Glutamine--tRNA ligase, found in Pectobacterium atrosepticum (strain SCRI 1043 / ATCC BAA-672) (Erwinia carotovora subsp. atroseptica).